Here is a 64-residue protein sequence, read N- to C-terminus: Large ribosomal subunit protein uL29 (64 aa).

Belongs to the universal ribosomal protein uL29 family.

This Nitratiruptor sp. (strain SB155-2) protein is Large ribosomal subunit protein uL29.